The primary structure comprises 573 residues: Leucine aminopeptidase, chloroplastic (573 aa).

The transit peptide at 1–53 (MATLRVSSLLASSPSSLHCNPSVFTKCQSSPRWAFSFSVTPLCSRRSKRIVHC) directs the protein to the chloroplast. Mn(2+)-binding residues include Lys-342 and Asp-347. The active site involves Lys-354. Mn(2+) is bound by residues Asp-367, Asp-427, and Glu-429. Arg-431 is an active-site residue.

It belongs to the peptidase M17 family. As to quaternary structure, homohexamer (dimer of homotrimers). The cofactor is Mn(2+). In terms of tissue distribution, in tubers and floral buds of untreated plants. After abscisic acid (ABA) treatment or mechanical wounding is mostly accumulated in leaves, to a lesser extent in stems, but not in roots.

The protein localises to the plastid. It is found in the chloroplast. It catalyses the reaction Release of an N-terminal amino acid, Xaa-|-Yaa-, in which Xaa is preferably Leu, but may be other amino acids including Pro although not Arg or Lys, and Yaa may be Pro. Amino acid amides and methyl esters are also readily hydrolyzed, but rates on arylamides are exceedingly low.. The enzyme catalyses Release of N-terminal proline from a peptide.. Functionally, presumably involved in the processing and regular turnover of intracellular proteins. This Solanum tuberosum (Potato) protein is Leucine aminopeptidase, chloroplastic (LAP).